The following is an 842-amino-acid chain: Glucans biosynthesis glucosyltransferase H (842 aa).

6 consecutive transmembrane segments (helical) span residues leucine 141–proline 161, isoleucine 194–methionine 214, valine 513–leucine 533, leucine 570–tryptophan 590, valine 615–glycine 635, and phenylalanine 680–isoleucine 700.

Belongs to the glycosyltransferase 2 family. OpgH subfamily.

It localises to the cell inner membrane. Its pathway is glycan metabolism; osmoregulated periplasmic glucan (OPG) biosynthesis. In terms of biological role, involved in the biosynthesis of osmoregulated periplasmic glucans (OPGs). This is Glucans biosynthesis glucosyltransferase H from Enterobacter sp. (strain 638).